The sequence spans 197 residues: Imidazoleglycerol-phosphate dehydratase (197 aa).

This sequence belongs to the imidazoleglycerol-phosphate dehydratase family.

It is found in the cytoplasm. It carries out the reaction D-erythro-1-(imidazol-4-yl)glycerol 3-phosphate = 3-(imidazol-4-yl)-2-oxopropyl phosphate + H2O. Its pathway is amino-acid biosynthesis; L-histidine biosynthesis; L-histidine from 5-phospho-alpha-D-ribose 1-diphosphate: step 6/9. The protein is Imidazoleglycerol-phosphate dehydratase of Methylocella silvestris (strain DSM 15510 / CIP 108128 / LMG 27833 / NCIMB 13906 / BL2).